A 79-amino-acid chain; its full sequence is Small ribosomal subunit protein bS18 (79 aa).

It belongs to the bacterial ribosomal protein bS18 family. In terms of assembly, part of the 30S ribosomal subunit. Forms a tight heterodimer with protein bS6.

Functionally, binds as a heterodimer with protein bS6 to the central domain of the 16S rRNA, where it helps stabilize the platform of the 30S subunit. The chain is Small ribosomal subunit protein bS18 from Ureaplasma parvum serovar 3 (strain ATCC 27815 / 27 / NCTC 11736).